A 117-amino-acid chain; its full sequence is MMENDEWWKYLIFPLVATLGGIVNYSKRALAMKRFSKLEFAVEAVSAAFVGLMVTLGGAAMDLSPHWLGMAAGMSGWMGADFVKAVFSQFVQSKIAPINQPGPIDSDNDKPGRTFND.

3 helical membrane passes run 6–26 (EWWK…VNYS), 40–60 (FAVE…GGAA), and 67–87 (WLGM…KAVF). Residues 97-117 (PINQPGPIDSDNDKPGRTFND) form a disordered region. Basic and acidic residues predominate over residues 107–117 (DNDKPGRTFND).

Homomultimer. Isoform Holin: Interacts with isoform Antiholin; this interaction blocks the holin homomultimerization and delays host cell lysis.

It is found in the host cell inner membrane. Isoform Holin: Accumulates harmlessly in the cytoplasmic membrane until it reaches a critical concentration that triggers the formation of micron-scale pores (holes) causing host cell membrane disruption and endolysin escape into the periplasmic space. Determines the precise timing of host cell lysis. Participates with the endolysin and spanin proteins in the sequential events which lead to the programmed host cell lysis releasing the mature viral particles from the host cell. In terms of biological role, isoform Antiholin: Counteracts the aggregation of the holin molecules and thus of pore formation. The protein is Holin (XXXV) of Enterobacteria phage PRD1 (Bacteriophage PRD1).